Reading from the N-terminus, the 405-residue chain is Argininosuccinate synthase (405 aa).

ATP-binding positions include Ala10–Ser18 and Ala37. 2 residues coordinate L-citrulline: Tyr88 and Ser93. Gly118 provides a ligand contact to ATP. L-aspartate is bound by residues Thr120, Asn124, and Asp125. Residue Asn124 coordinates L-citrulline. Positions 128, 179, 188, 264, and 276 each coordinate L-citrulline.

Belongs to the argininosuccinate synthase family. Type 1 subfamily. As to quaternary structure, homotetramer.

The protein resides in the cytoplasm. It catalyses the reaction L-citrulline + L-aspartate + ATP = 2-(N(omega)-L-arginino)succinate + AMP + diphosphate + H(+). Its pathway is amino-acid biosynthesis; L-arginine biosynthesis; L-arginine from L-ornithine and carbamoyl phosphate: step 2/3. The protein is Argininosuccinate synthase of Pseudomonas syringae pv. tomato (strain ATCC BAA-871 / DC3000).